The sequence spans 495 residues: ATP synthase subunit beta, chloroplastic (495 aa).

ATP is bound at residue 172-179 (GGAGVGKT).

This sequence belongs to the ATPase alpha/beta chains family. In terms of assembly, F-type ATPases have 2 components, CF(1) - the catalytic core - and CF(0) - the membrane proton channel. CF(1) has five subunits: alpha(3), beta(3), gamma(1), delta(1), epsilon(1). CF(0) has four main subunits: a(1), b(1), b'(1) and c(9-12).

The protein localises to the plastid. The protein resides in the chloroplast thylakoid membrane. It catalyses the reaction ATP + H2O + 4 H(+)(in) = ADP + phosphate + 5 H(+)(out). Its function is as follows. Produces ATP from ADP in the presence of a proton gradient across the membrane. The catalytic sites are hosted primarily by the beta subunits. The polypeptide is ATP synthase subunit beta, chloroplastic (Scilla messeniaca (Greek squill)).